The sequence spans 233 residues: Orotidine 5'-phosphate decarboxylase (233 aa).

Residues Asp-13, Lys-35, 62–71 (DLKFHDIPNT), Thr-122, Arg-182, Gln-191, Gly-211, and Arg-212 contribute to the substrate site. The Proton donor role is filled by Lys-64.

The protein belongs to the OMP decarboxylase family. Type 1 subfamily. As to quaternary structure, homodimer.

The enzyme catalyses orotidine 5'-phosphate + H(+) = UMP + CO2. It functions in the pathway pyrimidine metabolism; UMP biosynthesis via de novo pathway; UMP from orotate: step 2/2. Its function is as follows. Catalyzes the decarboxylation of orotidine 5'-monophosphate (OMP) to uridine 5'-monophosphate (UMP). This chain is Orotidine 5'-phosphate decarboxylase, found in Pseudomonas putida (strain W619).